The primary structure comprises 142 residues: Large ribosomal subunit protein uL13 (142 aa).

It belongs to the universal ribosomal protein uL13 family. In terms of assembly, part of the 50S ribosomal subunit.

Functionally, this protein is one of the early assembly proteins of the 50S ribosomal subunit, although it is not seen to bind rRNA by itself. It is important during the early stages of 50S assembly. This chain is Large ribosomal subunit protein uL13, found in Janthinobacterium sp. (strain Marseille) (Minibacterium massiliensis).